The sequence spans 120 residues: Large ribosomal subunit protein bL12 (120 aa).

It belongs to the bacterial ribosomal protein bL12 family. In terms of assembly, homodimer. Part of the ribosomal stalk of the 50S ribosomal subunit. Forms a multimeric L10(L12)X complex, where L10 forms an elongated spine to which 2 to 4 L12 dimers bind in a sequential fashion. Binds GTP-bound translation factors.

Forms part of the ribosomal stalk which helps the ribosome interact with GTP-bound translation factors. Is thus essential for accurate translation. This Haemophilus ducreyi (strain 35000HP / ATCC 700724) protein is Large ribosomal subunit protein bL12.